A 357-amino-acid polypeptide reads, in one-letter code: Embryonic growth/differentiation factor 1 (357 aa).

An N-terminal signal peptide occupies residues 1–23; sequence MLPVCHRFCDHLLLLLLLPSTTL. Positions 24-237 are excised as a propeptide; it reads APAPASMGPA…RLCPLPRLRR (214 aa). An N-linked (GlcNAc...) asparagine glycan is attached at Asn191. 3 disulfides stabilise this stretch: Cys251/Cys322, Cys280/Cys354, and Cys284/Cys356.

It belongs to the TGF-beta family. As to quaternary structure, homodimer; disulfide-linked. Expressed almost exclusively in the nervous system.

Its subcellular location is the secreted. May mediate cell differentiation events during embryonic development. The sequence is that of Embryonic growth/differentiation factor 1 (Gdf1) from Mus musculus (Mouse).